The primary structure comprises 263 residues: Retinoic acid early transcript 1E (263 aa).

The first 30 residues, 1–30 (MRRISLTSSPVRLLLFLLLLLIALEIMVGG), serve as a signal peptide directing secretion. An MHC class I alpha-1 like; down-regulates the cell surface expression of KLRK1 region spans residues 31–116 (HSLCFNFTIK…DIKPQIKTSD (86 aa)). Over 31–225 (HSLCFNFTIK…IHWSSSSLPD (195 aa)) the chain is Extracellular. 3 N-linked (GlcNAc...) asparagine glycosylation sites follow: Asn-36, Asn-154, and Asn-212. Positions 117–207 (PSTLQVEMFC…GHWEAMPEPT (91 aa)) are MHC class I alpha-2 like; down-regulates the cell surface expression of KLRK1. Cys-126 and Cys-189 are oxidised to a cystine. Residues 226-248 (RWIILGAFILLVLMGIVLICVWW) traverse the membrane as a helical segment. Residues 249–263 (QNGEWQAGLWPLRTS) lie on the Cytoplasmic side of the membrane.

The protein belongs to the MHC class I family. As to quaternary structure, binds to KLRK1/NKG2D. (Microbial infection) Contrary to other family members, does not interact with CMV glycoprotein UL16. In terms of tissue distribution, predominantly expressed in the skin, but also expressed in testis and trachea. Up-regulated in tumor cells of different origins. Expression progressively decreased after treatment of tumor cells with retinoic acid.

Its subcellular location is the membrane. The protein resides in the secreted. Its function is as follows. Binds and activates the KLRK1/NKG2D receptor, mediating natural killer cell cytotoxicity. The sequence is that of Retinoic acid early transcript 1E from Homo sapiens (Human).